The sequence spans 97 residues: C-C motif chemokine 7 (97 aa).

The N-terminal stretch at 1 to 23 is a signal peptide; it reads MQISAALLCVLLTAAAFTVHVWA. Q24 bears the Pyrrolidone carboxylic acid mark. N29 carries an N-linked (GlcNAc...) asparagine glycan. 2 cysteine pairs are disulfide-bonded: C33-C57 and C34-C73.

Belongs to the intercrine beta (chemokine CC) family. Monomer. Interacts with TNFAIP6 (via Link domain).

The protein localises to the secreted. Functionally, chemotactic factor that attracts monocytes and eosinophils, but not neutrophils. Augments monocyte anti-tumor activity. This Rattus norvegicus (Rat) protein is C-C motif chemokine 7 (Ccl7).